A 73-amino-acid polypeptide reads, in one-letter code: Photosystem I reaction center subunit IV (73 aa).

This sequence belongs to the PsaE family.

The protein resides in the cellular thylakoid membrane. In terms of biological role, stabilizes the interaction between PsaC and the PSI core, assists the docking of the ferredoxin to PSI and interacts with ferredoxin-NADP oxidoreductase. The sequence is that of Photosystem I reaction center subunit IV from Synechococcus sp. (strain JA-3-3Ab) (Cyanobacteria bacterium Yellowstone A-Prime).